The chain runs to 142 residues: Large ribosomal subunit protein uL13 (142 aa).

It belongs to the universal ribosomal protein uL13 family. Part of the 50S ribosomal subunit.

Functionally, this protein is one of the early assembly proteins of the 50S ribosomal subunit, although it is not seen to bind rRNA by itself. It is important during the early stages of 50S assembly. The sequence is that of Large ribosomal subunit protein uL13 from Vibrio cholerae serotype O1 (strain M66-2).